We begin with the raw amino-acid sequence, 450 residues long: Molybdate-anion transporter (450 aa).

The next 12 helical transmembrane spans lie at Met1–Leu21, Phe38–Leu58, Ile79–Val99, Phe128–Phe148, Ile167–Val187, Ala191–Leu211, Val249–Leu269, Gly278–Leu298, Pro311–Phe331, Phe344–Leu364, Gly376–Leu396, and Phe409–Val429.

Belongs to the major facilitator superfamily.

The protein localises to the cell membrane. In terms of biological role, mediates high-affinity intracellular uptake of the rare oligo-element molybdenum. This Mus musculus (Mouse) protein is Molybdate-anion transporter (Mfsd5).